The following is a 552-amino-acid chain: Dihydroxy-acid dehydratase (552 aa).

Residue aspartate 78 coordinates Mg(2+). [2Fe-2S] cluster is bound at residue cysteine 119. 2 residues coordinate Mg(2+): aspartate 120 and lysine 121. N6-carboxylysine is present on lysine 121. Cysteine 191 is a [2Fe-2S] cluster binding site. Residue glutamate 442 participates in Mg(2+) binding. Serine 468 serves as the catalytic Proton acceptor.

Belongs to the IlvD/Edd family. As to quaternary structure, homodimer. [2Fe-2S] cluster is required as a cofactor. The cofactor is Mg(2+).

It carries out the reaction (2R)-2,3-dihydroxy-3-methylbutanoate = 3-methyl-2-oxobutanoate + H2O. It catalyses the reaction (2R,3R)-2,3-dihydroxy-3-methylpentanoate = (S)-3-methyl-2-oxopentanoate + H2O. It participates in amino-acid biosynthesis; L-isoleucine biosynthesis; L-isoleucine from 2-oxobutanoate: step 3/4. Its pathway is amino-acid biosynthesis; L-valine biosynthesis; L-valine from pyruvate: step 3/4. In terms of biological role, functions in the biosynthesis of branched-chain amino acids. Catalyzes the dehydration of (2R,3R)-2,3-dihydroxy-3-methylpentanoate (2,3-dihydroxy-3-methylvalerate) into 2-oxo-3-methylpentanoate (2-oxo-3-methylvalerate) and of (2R)-2,3-dihydroxy-3-methylbutanoate (2,3-dihydroxyisovalerate) into 2-oxo-3-methylbutanoate (2-oxoisovalerate), the penultimate precursor to L-isoleucine and L-valine, respectively. The chain is Dihydroxy-acid dehydratase from Moorella thermoacetica (strain ATCC 39073 / JCM 9320).